The chain runs to 111 residues: UPF0060 membrane protein Krad_3114 (111 aa).

A run of 4 helical transmembrane segments spans residues 7–27 (IALF…VWQG), 33–53 (GLAW…AATL), 62–82 (VLAA…AVVD), and 88–108 (RFDV…MYAP).

The protein belongs to the UPF0060 family.

Its subcellular location is the cell membrane. This is UPF0060 membrane protein Krad_3114 from Kineococcus radiotolerans (strain ATCC BAA-149 / DSM 14245 / SRS30216).